Reading from the N-terminus, the 254-residue chain is 3-dehydroquinate dehydratase (254 aa).

3-dehydroquinate-binding positions include 47 to 49 (EWR) and arginine 83. Histidine 144 (proton donor/acceptor) is an active-site residue. The active-site Schiff-base intermediate with substrate is lysine 171. 3-dehydroquinate contacts are provided by arginine 214, serine 233, and glutamine 237.

It belongs to the type-I 3-dehydroquinase family. In terms of assembly, homodimer.

The catalysed reaction is 3-dehydroquinate = 3-dehydroshikimate + H2O. It functions in the pathway metabolic intermediate biosynthesis; chorismate biosynthesis; chorismate from D-erythrose 4-phosphate and phosphoenolpyruvate: step 3/7. Functionally, involved in the third step of the chorismate pathway, which leads to the biosynthesis of aromatic amino acids. Catalyzes the cis-dehydration of 3-dehydroquinate (DHQ) and introduces the first double bond of the aromatic ring to yield 3-dehydroshikimate. This chain is 3-dehydroquinate dehydratase, found in Bacillus licheniformis (strain ATCC 14580 / DSM 13 / JCM 2505 / CCUG 7422 / NBRC 12200 / NCIMB 9375 / NCTC 10341 / NRRL NRS-1264 / Gibson 46).